Reading from the N-terminus, the 587-residue chain is A-type ATP synthase subunit A (587 aa).

234-241 (GPFGSGKT) serves as a coordination point for ATP.

It belongs to the ATPase alpha/beta chains family. The N-terminus (approximately residues 106-122) interacts with subunit H. Has multiple subunits with at least A(3), B(3), C, D, E(1 or 2), F, H(2), I and proteolipid K(x).

It localises to the cell membrane. The catalysed reaction is ATP + H2O + 4 H(+)(in) = ADP + phosphate + 5 H(+)(out). Its activity is regulated as follows. ATP hydrolysis is inhibited by N',N'-dicyclohexylcarbodiimide. Its function is as follows. Component of the A-type ATP synthase that produces ATP from ADP in the presence of a proton gradient across the membrane. The A chain is the catalytic subunit. Hydrolyzes ATP, GTP (86% of ATPase rate) and UTP (54% of ATPase rate), has very poor activity on CTP. This chain is A-type ATP synthase subunit A, found in Methanocaldococcus jannaschii (strain ATCC 43067 / DSM 2661 / JAL-1 / JCM 10045 / NBRC 100440) (Methanococcus jannaschii).